Consider the following 418-residue polypeptide: Gamma-glutamyl phosphate reductase (418 aa).

It belongs to the gamma-glutamyl phosphate reductase family.

It is found in the cytoplasm. The enzyme catalyses L-glutamate 5-semialdehyde + phosphate + NADP(+) = L-glutamyl 5-phosphate + NADPH + H(+). Its pathway is amino-acid biosynthesis; L-proline biosynthesis; L-glutamate 5-semialdehyde from L-glutamate: step 2/2. Catalyzes the NADPH-dependent reduction of L-glutamate 5-phosphate into L-glutamate 5-semialdehyde and phosphate. The product spontaneously undergoes cyclization to form 1-pyrroline-5-carboxylate. This chain is Gamma-glutamyl phosphate reductase, found in Thermobifida fusca (strain YX).